The chain runs to 298 residues: Heterogeneous nuclear ribonucleoprotein C (298 aa).

An N-acetylalanine modification is found at Ala2. Glycyl lysine isopeptide (Lys-Gly) (interchain with G-Cter in SUMO2) cross-links involve residues Lys8, Lys50, Lys89, and Lys94. The RRM domain maps to 16–87; that stretch reads SRVFIGNLNT…QVLDINLAAE (72 aa). Ser108 is subject to Phosphoserine. Disordered regions lie at residues 131-177 and 204-298; these read PPPP…VKGD and EKEQ…EDDS. Positions 142–148 match the Nuclear localization signal motif; the sequence is PSKRQRV. A phosphoserine mark is found at Ser149 and Ser153. Over residues 162–173 the composition is skewed to low complexity; sequence SKSGQRGSSSKS. Lys163 is modified (N6-acetyllysine; alternate). Lys163 participates in a covalent cross-link: Glycyl lysine isopeptide (Lys-Gly) (interchain with G-Cter in SUMO2); alternate. The stretch at 176-211 forms a coiled coil; it reads GDDLQAIKKELTQIKQKVDSLLESLEKIEKEQSKQA. Lys209 is covalently cross-linked (Glycyl lysine isopeptide (Lys-Gly) (interchain with G-Cter in SUMO2)). Residues Ser214, Ser216, and Ser217 each carry the phosphoserine modification. Residue Lys222 forms a Glycyl lysine isopeptide (Lys-Gly) (interchain with G-Cter in SUMO2) linkage. A Glycyl lysine isopeptide (Lys-Gly) (interchain with G-Cter in SUMO2); alternate cross-link involves residue Lys225. Residue Lys225 forms a Glycyl lysine isopeptide (Lys-Gly) (interchain with G-Cter in SUMO1); alternate linkage. 4 positions are modified to phosphoserine: Ser226, Ser231, Ser232, and Ser234. The segment covering 235–246 has biased composition (basic and acidic residues); the sequence is VKKDETNVKMES. Residues Lys236 and Lys237 each participate in a glycyl lysine isopeptide (Lys-Gly) (interchain with G-Cter in SUMO2) cross-link. Lys243 is covalently cross-linked (Glycyl lysine isopeptide (Lys-Gly) (interchain with G-Cter in SUMO2); alternate). A Glycyl lysine isopeptide (Lys-Gly) (interchain with G-Cter in SUMO); alternate cross-link involves residue Lys243. Phosphoserine occurs at positions 246 and 253. Residues 248 to 269 show a composition bias toward acidic residues; that stretch reads AGADDSAEEGDLLDDDDNEDRG. Basic and acidic residues predominate over residues 270 to 279; that stretch reads DDQLELKDDE. The span at 280–298 shows a compositional bias: acidic residues; sequence KEPEEGEDDRDSANGEDDS. Phosphoserine occurs at positions 291 and 298.

Belongs to the RRM HNRPC family. RALY subfamily. In terms of assembly, tetramer composed of 3 copies of isoform C1 and 1 copy of isoform C2. Assembly of 3 tetramers with bound pre-mRNA gives rise to a 19S complex that interacts with HNRNPA2B1 tetramers. Component of the 40S hnRNP particle. Identified in the spliceosome C complex. Interacts with IGF2BP1. Interacts with PPIA/CYPA. In terms of processing, phosphorylated on Ser-253 and Ser-291 in resting cells. Sumoylated. Sumoylation reduces affinity for mRNA. Post-translationally, ubiquitinated and degraded after nucleo-cytoplasmic transport by YWHAE.

It localises to the nucleus. Its function is as follows. Binds pre-mRNA and nucleates the assembly of 40S hnRNP particles. Interacts with poly-U tracts in the 3'-UTR or 5'-UTR of mRNA and modulates the stability and the level of translation of bound mRNA molecules. Single HNRNPC tetramers bind 230-240 nucleotides. Trimers of HNRNPC tetramers bind 700 nucleotides. May play a role in the early steps of spliceosome assembly and pre-mRNA splicing. N6-methyladenosine (m6A) has been shown to alter the local structure in mRNAs and long non-coding RNAs (lncRNAs) via a mechanism named 'm(6)A-switch', facilitating binding of HNRNPC, leading to regulation of mRNA splicing. In Rattus norvegicus (Rat), this protein is Heterogeneous nuclear ribonucleoprotein C.